Reading from the N-terminus, the 206-residue chain is Large ribosomal subunit protein uL4 (206 aa).

Positions 63–97 are disordered; the sequence is MYKQKGTGRARHHSARAPQFRGGGKAHGPVVRSHE. The segment covering 64-77 has biased composition (basic residues); that stretch reads YKQKGTGRARHHSA.

This sequence belongs to the universal ribosomal protein uL4 family. In terms of assembly, part of the 50S ribosomal subunit.

In terms of biological role, one of the primary rRNA binding proteins, this protein initially binds near the 5'-end of the 23S rRNA. It is important during the early stages of 50S assembly. It makes multiple contacts with different domains of the 23S rRNA in the assembled 50S subunit and ribosome. Its function is as follows. Forms part of the polypeptide exit tunnel. In Rhizobium johnstonii (strain DSM 114642 / LMG 32736 / 3841) (Rhizobium leguminosarum bv. viciae), this protein is Large ribosomal subunit protein uL4.